Consider the following 1254-residue polypeptide: DNA polymerase gamma (1254 aa).

The segment covering 1125 to 1137 (RKKENRIDDENKK) has biased composition (basic and acidic residues). 2 disordered regions span residues 1125 to 1145 (RKKE…KKNT) and 1202 to 1240 (YKKK…TNRN). A compositionally biased stretch (polar residues) spans 1208-1217 (QARTASSSPI). Residues 1219 to 1231 (KTAKAVHSKKLPA) are compositionally biased toward basic residues.

This sequence belongs to the DNA polymerase type-A family. Mg(2+) is required as a cofactor.

The protein resides in the mitochondrion. The catalysed reaction is DNA(n) + a 2'-deoxyribonucleoside 5'-triphosphate = DNA(n+1) + diphosphate. Functionally, involved in the replication of mitochondrial DNA. The chain is DNA polymerase gamma (MIP1) from Saccharomyces cerevisiae (strain ATCC 204508 / S288c) (Baker's yeast).